A 207-amino-acid polypeptide reads, in one-letter code: Coiled-coil domain-containing protein 25 (207 aa).

Residues M1–D104 lie on the Extracellular side of the membrane. Positions K20–E24 are DNA-binding. A helical transmembrane segment spans residues I105 to V121. The stretch at R112–M189 forms a coiled coil. At E122–M207 the chain is on the cytoplasmic side. Positions Y140 to K183 are enriched in basic and acidic residues. The segment at Y140–M207 is disordered. A compositionally biased stretch (polar residues) spans N184–E198. At S203 the chain carries Phosphoserine.

Belongs to the CCDC25 family. As to quaternary structure, interacts (via cytoplasmic region) with ILK.

It is found in the cell membrane. The protein resides in the endomembrane system. Its function is as follows. Transmembrane receptor that senses neutrophil extracellular traps (NETs) and triggers the ILK-PARVB pathway to enhance cell motility. NETs are mainly composed of DNA fibers and are released by neutrophils to bind pathogens during inflammation. Specifically binds NETs on its extracellular region, in particular the 8-OHdG-enriched DNA present in NETs, and recruits ILK, initiating the ILK-PARVB cascade to induce cytoskeleton rearrangement and directional migration of cells. The polypeptide is Coiled-coil domain-containing protein 25 (Danio rerio (Zebrafish)).